A 537-amino-acid polypeptide reads, in one-letter code: MIPGRIFLVLLVIFNTKPIHPNTLTEKYYESTCSVETAGYKSALRTGWHMTVMSIKLSQINIESCKSSNSLLAHELAIYSSAVDELRTLSSNALKSKRKKRFLGLILGLGAAVTAGVALAKTVQLESEIALIRDAVRNTNEAVVSLTNGMSVLAKVVDDLKNFISKELLPKINRVSCDVHDITAVIRFQQLNKRLLEVSREFSSNAGLTHTVSSFMLTDRELTSIVGGMAVSAGQKEIMLSSKAIMRRNGLAILSSVNADTLVYVIQLPLFGVMDTDCWVIRSSIDCHNIADKYACLARADNGWYCHNAGSLSYFPSPTDCEIHNGYAFCDTLKSLTVPVTSRECNSNMYTTNYDCKISTSKTYVSTAVLTTMGCLVSCYGHNSCTVINNDKGIIRTLPDGCHYISNKGVDRVQVGNTVYYLSKEVGKSIVVRGEPLVLKYDPLSFPDDKFDVAIRDVEHSINQTRTFFKASDQLLDLSENRENKNLNKSYILTTLLFVVMLIIIMAVIGFILYKVLKMIRDNKLKSKSTPGLTVLS.

The first 21 residues, 1-21, serve as a signal peptide directing secretion; the sequence is MIPGRIFLVLLVIFNTKPIHP. The Extracellular segment spans residues 26 to 486; it reads EKYYESTCSV…DLSENRENKN (461 aa). 7 disulfide bridges follow: C33–C402, C65–C177, C278–C306, C287–C296, C321–C330, C345–C356, and C379–C385. The fusion peptide stretch occupies residues 102–122; sequence FLGLILGLGAAVTAGVALAKT. Residues 120-174 are a coiled coil; it reads AKTVQLESEIALIRDAVRNTNEAVVSLTNGMSVLAKVVDDLKNFISKELLPKINR. Residues 444–479 are a coiled coil; sequence LSFPDDKFDVAIRDVEHSINQTRTFFKASDQLLDLS. N463 carries N-linked (GlcNAc...) asparagine; by host glycosylation. A helical membrane pass occupies residues 487–515; it reads LNKSYILTTLLFVVMLIIIMAVIGFILYK. Residues 516-537 lie on the Cytoplasmic side of the membrane; sequence VLKMIRDNKLKSKSTPGLTVLS.

It belongs to the paramyxoviruses fusion glycoprotein family. Homotrimer. Heterodimer with fusion protein F2; disulfide-linked. Part of a complex composed of F1, F2 and G glycoproteins. In terms of assembly, homotrimer. Heterodimer with fusion protein F1; disulfide-linked. Part of a complex composed of F1, F2 and G glycoproteins. Post-translationally, the F glycoprotein is synthesized as a F0 inactive precursor that is heavily N-glycosylated and processed by a host furin-like protease probably in the Golgi.

Its subcellular location is the host Golgi apparatus membrane. It localises to the virion membrane. The protein resides in the host cell membrane. Inactive precursor that is cleaved by a furin-like protease to give rise to the mature F1 and F2 fusion glycoproteins. Functionally, class I viral fusion protein. Under the current model, the protein has at least 3 conformational states: pre-fusion native state, pre-hairpin intermediate state, and post-fusion hairpin state. During viral and plasma cell membrane fusion, the coiled coil regions assume a trimer-of-hairpins structure, positioning the fusion peptide in close proximity to the C-terminal region of the ectodomain. The formation of this structure appears to drive apposition and subsequent fusion of viral and cellular membranes leading to delivery of the nucleocapsid into the cytoplasm. This fusion is pH independent and occurs at the plasma or endosomal membrane. The trimer of F1-F2 (F protein) also facilitates the attachment and entry into the host cell. Later in infection, F protein expressed at the plasma membrane of infected cells can mediate fusion with adjacent cells to form syncytia, a cytopathic effect that could lead to tissue necrosis. In terms of biological role, major determinant of the species specificity of RSV infection. The trimer of F1-F2 (F protein) also facilitates the attachment and entry into the host cell. Later in infection, F protein expressed at the plasma membrane of infected cells can mediate fusion with adjacent cells to form syncytia, a cytopathic effect that could lead to tissue necrosis. This chain is Fusion glycoprotein F0 (F), found in Mus musculus (Mouse).